Reading from the N-terminus, the 369-residue chain is GTPase Obg (369 aa).

Residues 1 to 159 form the Obg domain; the sequence is MKFVDEVTID…KNLKLELRVL (159 aa). Residues 160–334 enclose the OBG-type G domain; that stretch reads ADVGLLGMPN…LIHAIYSHVA (175 aa). GTP-binding positions include 166 to 173, 191 to 195, 213 to 216, 284 to 287, and 315 to 317; these read GMPNAGKS, FTTLH, DIPG, NKLD, and SAL. S173 and T193 together coordinate Mg(2+). A disordered region spans residues 339–369; that stretch reads QPEEVPDPRFTTNEDLSEAAPAPDRDDPRFR.

It belongs to the TRAFAC class OBG-HflX-like GTPase superfamily. OBG GTPase family. Monomer. The cofactor is Mg(2+).

It is found in the cytoplasm. In terms of biological role, an essential GTPase which binds GTP, GDP and possibly (p)ppGpp with moderate affinity, with high nucleotide exchange rates and a fairly low GTP hydrolysis rate. Plays a role in control of the cell cycle, stress response, ribosome biogenesis and in those bacteria that undergo differentiation, in morphogenesis control. In Leptothrix cholodnii (strain ATCC 51168 / LMG 8142 / SP-6) (Leptothrix discophora (strain SP-6)), this protein is GTPase Obg.